The chain runs to 147 residues: Hemoglobin subunit gamma (147 aa).

Positions 3-147 constitute a Globin domain; it reads YFTAEEKAAI…VASALARKYH (145 aa). The heme b site is built by His-64 and His-93.

This sequence belongs to the globin family. In terms of assembly, heterotetramer of two alpha chains and two gamma chains in fetal hemoglobin (Hb F). Red blood cells.

Gamma chains make up the fetal hemoglobin F, in combination with alpha chains. This is Hemoglobin subunit gamma (HBG) from Dugong dugon (Dugong).